A 445-amino-acid polypeptide reads, in one-letter code: Phosphoglucosamine mutase (445 aa).

Serine 102 functions as the Phosphoserine intermediate in the catalytic mechanism. Serine 102, aspartate 241, aspartate 243, and aspartate 245 together coordinate Mg(2+). Serine 102 is subject to Phosphoserine.

It belongs to the phosphohexose mutase family. Mg(2+) serves as cofactor. In terms of processing, activated by phosphorylation.

It catalyses the reaction alpha-D-glucosamine 1-phosphate = D-glucosamine 6-phosphate. Catalyzes the conversion of glucosamine-6-phosphate to glucosamine-1-phosphate. This Hahella chejuensis (strain KCTC 2396) protein is Phosphoglucosamine mutase.